Consider the following 154-residue polypeptide: Transcriptional repressor NrdR (154 aa).

A zinc finger spans residues 3 to 34 (CPFCGANDTKVIDSRLVAEGEQVRRRRECVAC). In terms of domain architecture, ATP-cone spans 49–139 (PRLIKQDGTR…VYRRFQDLDE (91 aa)).

This sequence belongs to the NrdR family. Zn(2+) is required as a cofactor.

Its function is as follows. Negatively regulates transcription of bacterial ribonucleotide reductase nrd genes and operons by binding to NrdR-boxes. The protein is Transcriptional repressor NrdR of Pseudomonas putida (strain GB-1).